A 316-amino-acid polypeptide reads, in one-letter code: MTMYAKNNTSGKDMLSLLEWNKEELTDIIKLAVAMKTNPAHYSHILSGKILGMIFDKPSTRTRVSFEAGILQLGGQAIVMSSKELQIGRGEPIKDTAHVMSEYIDAIMIRTFSHEKVEELAYHAEIPIINGLTDLHHPCQALADLMTIYEWKDQLEGIKLAYIGDGNNVCHSLLLAGAMVGIDIRLAMPKGYEVDETILAKAENLAKQSGGKIFVTEDSKLAVTDADFIYTDVWTSMGQEDENAKRLADFGEKYQVNAELVSGAKPDYHFLHCLPAHREEEVTTEIIDGIHSVIYQQAGNRLHAQKALLAAILEAK.

Residues 59-62 (STRT), Gln-86, Arg-110, and 137-140 (HPCQ) each bind carbamoyl phosphate. Residues Asn-168, Asp-232, and 236 to 237 (SM) each bind L-ornithine. Carbamoyl phosphate is bound by residues 273–274 (CL) and Arg-301.

This sequence belongs to the aspartate/ornithine carbamoyltransferase superfamily. OTCase family.

It is found in the cytoplasm. It catalyses the reaction carbamoyl phosphate + L-ornithine = L-citrulline + phosphate + H(+). The protein operates within amino-acid biosynthesis; L-arginine biosynthesis; L-arginine from L-ornithine and carbamoyl phosphate: step 1/3. Reversibly catalyzes the transfer of the carbamoyl group from carbamoyl phosphate (CP) to the N(epsilon) atom of ornithine (ORN) to produce L-citrulline. This Listeria monocytogenes serovar 1/2a (strain ATCC BAA-679 / EGD-e) protein is Ornithine carbamoyltransferase (argF).